We begin with the raw amino-acid sequence, 338 residues long: Anthranilate phosphoribosyltransferase (338 aa).

Residues Gly81, 84–85, Ser89, 91–94, 109–117, and Ala121 each bind 5-phospho-alpha-D-ribose 1-diphosphate; these read GD, NVST, and KHGNRALSS. Gly81 is an anthranilate binding site. Mg(2+) is bound at residue Ser93. Residue Asn112 participates in anthranilate binding. Position 167 (Arg167) interacts with anthranilate. Mg(2+)-binding residues include Asp226 and Glu227.

The protein belongs to the anthranilate phosphoribosyltransferase family. Homodimer. It depends on Mg(2+) as a cofactor.

The catalysed reaction is N-(5-phospho-beta-D-ribosyl)anthranilate + diphosphate = 5-phospho-alpha-D-ribose 1-diphosphate + anthranilate. The protein operates within amino-acid biosynthesis; L-tryptophan biosynthesis; L-tryptophan from chorismate: step 2/5. Its function is as follows. Catalyzes the transfer of the phosphoribosyl group of 5-phosphorylribose-1-pyrophosphate (PRPP) to anthranilate to yield N-(5'-phosphoribosyl)-anthranilate (PRA). In Rhodopseudomonas palustris (strain TIE-1), this protein is Anthranilate phosphoribosyltransferase.